Reading from the N-terminus, the 628-residue chain is DNA mismatch repair protein MutL (628 aa).

The segment at 332 to 416 (PTSAMPAPGN…ASTAPPLSEE (85 aa)) is disordered. Polar residues predominate over residues 375–396 (EGSSRSDVPYPSASQVTETTDS).

Belongs to the DNA mismatch repair MutL/HexB family.

In terms of biological role, this protein is involved in the repair of mismatches in DNA. It is required for dam-dependent methyl-directed DNA mismatch repair. May act as a 'molecular matchmaker', a protein that promotes the formation of a stable complex between two or more DNA-binding proteins in an ATP-dependent manner without itself being part of a final effector complex. The sequence is that of DNA mismatch repair protein MutL from Syntrophotalea carbinolica (strain DSM 2380 / NBRC 103641 / GraBd1) (Pelobacter carbinolicus).